Here is a 206-residue protein sequence, read N- to C-terminus: Holliday junction branch migration complex subunit RuvA (206 aa).

Residues 1–64 form a domain I region; the sequence is MIGRLSGTIL…EDAQLLYGFN (64 aa). Residues 65 to 143 form a domain II region; it reads KKSERELFRE…GWGEGDLFTP (79 aa). The segment at 144-157 is flexible linker; sequence ASDAAASNAEIQKY. Residues 158–206 are domain III; that stretch reads SSARAEDEAVSALIALGYKALQAAKVVSQVVKPEMSSENIIREALRSMV.

The protein belongs to the RuvA family. As to quaternary structure, homotetramer. Forms an RuvA(8)-RuvB(12)-Holliday junction (HJ) complex. HJ DNA is sandwiched between 2 RuvA tetramers; dsDNA enters through RuvA and exits via RuvB. An RuvB hexamer assembles on each DNA strand where it exits the tetramer. Each RuvB hexamer is contacted by two RuvA subunits (via domain III) on 2 adjacent RuvB subunits; this complex drives branch migration. In the full resolvosome a probable DNA-RuvA(4)-RuvB(12)-RuvC(2) complex forms which resolves the HJ.

Its subcellular location is the cytoplasm. In terms of biological role, the RuvA-RuvB-RuvC complex processes Holliday junction (HJ) DNA during genetic recombination and DNA repair, while the RuvA-RuvB complex plays an important role in the rescue of blocked DNA replication forks via replication fork reversal (RFR). RuvA specifically binds to HJ cruciform DNA, conferring on it an open structure. The RuvB hexamer acts as an ATP-dependent pump, pulling dsDNA into and through the RuvAB complex. HJ branch migration allows RuvC to scan DNA until it finds its consensus sequence, where it cleaves and resolves the cruciform DNA. In Photobacterium profundum (strain SS9), this protein is Holliday junction branch migration complex subunit RuvA.